A 361-amino-acid polypeptide reads, in one-letter code: Phosphoserine aminotransferase (361 aa).

Arg42 contributes to the L-glutamate binding site. Residues 76–77 (AR), Trp102, Thr153, Asp173, and Gln196 contribute to the pyridoxal 5'-phosphate site. An N6-(pyridoxal phosphate)lysine modification is found at Lys197. Pyridoxal 5'-phosphate is bound at residue 238-239 (NT).

The protein belongs to the class-V pyridoxal-phosphate-dependent aminotransferase family. SerC subfamily. Homodimer. The cofactor is pyridoxal 5'-phosphate.

The protein resides in the cytoplasm. It carries out the reaction O-phospho-L-serine + 2-oxoglutarate = 3-phosphooxypyruvate + L-glutamate. The enzyme catalyses 4-(phosphooxy)-L-threonine + 2-oxoglutarate = (R)-3-hydroxy-2-oxo-4-phosphooxybutanoate + L-glutamate. It functions in the pathway amino-acid biosynthesis; L-serine biosynthesis; L-serine from 3-phospho-D-glycerate: step 2/3. The protein operates within cofactor biosynthesis; pyridoxine 5'-phosphate biosynthesis; pyridoxine 5'-phosphate from D-erythrose 4-phosphate: step 3/5. Catalyzes the reversible conversion of 3-phosphohydroxypyruvate to phosphoserine and of 3-hydroxy-2-oxo-4-phosphonooxybutanoate to phosphohydroxythreonine. The polypeptide is Phosphoserine aminotransferase (Yersinia pestis (strain Pestoides F)).